The primary structure comprises 113 residues: Large ribosomal subunit protein bL19 (113 aa).

The protein belongs to the bacterial ribosomal protein bL19 family.

Functionally, this protein is located at the 30S-50S ribosomal subunit interface and may play a role in the structure and function of the aminoacyl-tRNA binding site. The polypeptide is Large ribosomal subunit protein bL19 (Natranaerobius thermophilus (strain ATCC BAA-1301 / DSM 18059 / JW/NM-WN-LF)).